The sequence spans 374 residues: Tryptophan--tRNA ligase (374 aa).

The 'HIGH' region signature appears at 81 to 89 (PSGPVHIGH). The 'KMSKS' region motif lies at 258–262 (KMSAS).

Belongs to the class-I aminoacyl-tRNA synthetase family.

The protein localises to the cytoplasm. The enzyme catalyses tRNA(Trp) + L-tryptophan + ATP = L-tryptophyl-tRNA(Trp) + AMP + diphosphate + H(+). This chain is Tryptophan--tRNA ligase, found in Pyrobaculum calidifontis (strain DSM 21063 / JCM 11548 / VA1).